The following is a 396-amino-acid chain: L-lactate dehydrogenase (396 aa).

The 380-residue stretch at 1–380 (MIISAASDYR…TQDSLVQVLG (380 aa)) folds into the FMN hydroxy acid dehydrogenase domain. Y24 provides a ligand contact to substrate. The FMN site is built by S106 and Q127. Y129 is a substrate binding site. Residue T155 coordinates FMN. R164 lines the substrate pocket. K251 contacts FMN. Catalysis depends on H275, which acts as the Proton acceptor. R278 serves as a coordination point for substrate. 306–330 (DSGIRNGLDVVRMIALGADTVLLGR) contributes to the FMN binding site.

The protein belongs to the FMN-dependent alpha-hydroxy acid dehydrogenase family. FMN serves as cofactor.

Its subcellular location is the cell inner membrane. The catalysed reaction is (S)-lactate + A = pyruvate + AH2. Its function is as follows. Catalyzes the conversion of L-lactate to pyruvate. Is coupled to the respiratory chain. The chain is L-lactate dehydrogenase from Escherichia coli O1:K1 / APEC.